We begin with the raw amino-acid sequence, 98 residues long: DNA-binding protein Fis (98 aa).

The segment at residues Gln74–Lys93 is a DNA-binding region (H-T-H motif).

The protein belongs to the transcriptional regulatory Fis family. Homodimer.

In terms of biological role, activates ribosomal RNA transcription. Plays a direct role in upstream activation of rRNA promoters. This Aeromonas hydrophila subsp. hydrophila (strain ATCC 7966 / DSM 30187 / BCRC 13018 / CCUG 14551 / JCM 1027 / KCTC 2358 / NCIMB 9240 / NCTC 8049) protein is DNA-binding protein Fis.